The chain runs to 568 residues: DNA ligase 2 (568 aa).

Glu-254 lines the ATP pocket. Lys-256 acts as the N6-AMP-lysine intermediate in catalysis. ATP is bound by residues Arg-261, Arg-276, Glu-306, Phe-346, Arg-425, and Lys-431.

It belongs to the ATP-dependent DNA ligase family. Mg(2+) serves as cofactor.

The enzyme catalyses ATP + (deoxyribonucleotide)n-3'-hydroxyl + 5'-phospho-(deoxyribonucleotide)m = (deoxyribonucleotide)n+m + AMP + diphosphate.. In terms of biological role, DNA ligase that seals nicks in double-stranded DNA during DNA replication, DNA recombination and DNA repair. This Methanosarcina acetivorans (strain ATCC 35395 / DSM 2834 / JCM 12185 / C2A) protein is DNA ligase 2.